The following is a 438-amino-acid chain: Elongation factor 1-alpha (438 aa).

The tr-type G domain maps to 6-229 (KPHLNIVIIG…ALDTLEVPPK (224 aa)). Residues 15–22 (GHVDHGKS) are G1. Position 15–22 (15–22 (GHVDHGKS)) interacts with GTP. Ser-22 contributes to the Mg(2+) binding site. The tract at residues 71–75 (GVTIS) is G2. The G3 stretch occupies residues 92-95 (DAPG). GTP contacts are provided by residues 92–96 (DAPGH) and 154–157 (NKMD). Residues 154 to 157 (NKMD) form a G4 region. The G5 stretch occupies residues 195-197 (SAW).

It belongs to the TRAFAC class translation factor GTPase superfamily. Classic translation factor GTPase family. EF-Tu/EF-1A subfamily.

It is found in the cytoplasm. The catalysed reaction is GTP + H2O = GDP + phosphate + H(+). Functionally, GTP hydrolase that promotes the GTP-dependent binding of aminoacyl-tRNA to the A-site of ribosomes during protein biosynthesis. The polypeptide is Elongation factor 1-alpha (Desulfurococcus mucosus (Desulfurococcus mobilis)).